A 49-amino-acid chain; its full sequence is MADKSDLGYTGLTDEQAQELHSVYMSGLWLFSAVAIVAHLAVYIWRPWF.

Topologically, residues 2 to 27 are cytoplasmic; the sequence is ADKSDLGYTGLTDEQAQELHSVYMSG. A bacteriochlorophyll-binding residues include His-21 and His-39. The chain crosses the membrane as a helical; Signal-anchor for type II membrane protein span at residues 28 to 45; sequence LWLFSAVAIVAHLAVYIW. Over 46–49 the chain is Periplasmic; the sequence is RPWF.

It belongs to the antenna complex beta subunit family. As to quaternary structure, the core complex is formed by different alpha and beta chains, binding bacteriochlorophyll molecules, and arranged most probably in tetrameric structures disposed around the reaction center. The non-pigmented gamma chains may constitute additional components.

Its subcellular location is the cell inner membrane. Functionally, antenna complexes are light-harvesting systems, which transfer the excitation energy to the reaction centers. In Cereibacter sphaeroides (strain ATCC 17023 / DSM 158 / JCM 6121 / CCUG 31486 / LMG 2827 / NBRC 12203 / NCIMB 8253 / ATH 2.4.1.) (Rhodobacter sphaeroides), this protein is Light-harvesting protein B-875 beta chain (pufB).